Reading from the N-terminus, the 440-residue chain is Adenylosuccinate synthetase 1, chloroplastic (440 aa).

GTP contacts are provided by residues 13–19 (GDEGKGK) and 41–43 (GHT). Asp14 serves as the catalytic Proton acceptor. Mg(2+) is bound by residues Asp14 and Gly41. Residues 14–17 (DEGK), 39–42 (NAGH), Thr135, Arg149, Gln230, Thr245, and Arg313 each bind IMP. The active-site Proton donor is His42. Position 309-315 (309-315 (TVTRRKR)) interacts with substrate. Residues Arg315 and 341 to 343 (KLD) contribute to the GTP site.

This sequence belongs to the adenylosuccinate synthetase family. As to quaternary structure, homodimer. It depends on Mg(2+) as a cofactor.

It is found in the plastid. It localises to the chloroplast. It catalyses the reaction IMP + L-aspartate + GTP = N(6)-(1,2-dicarboxyethyl)-AMP + GDP + phosphate + 2 H(+). It participates in purine metabolism; AMP biosynthesis via de novo pathway; AMP from IMP: step 1/2. In terms of biological role, plays an important role in the de novo pathway and in the salvage pathway of purine nucleotide biosynthesis. Catalyzes the first committed step in the biosynthesis of AMP from IMP. This is Adenylosuccinate synthetase 1, chloroplastic from Ricinus communis (Castor bean).